We begin with the raw amino-acid sequence, 551 residues long: DNA double-strand break repair helicase HerA (551 aa).

ATP-binding positions include Arg152, 161-166 (GAGKSN), and 507-508 (RI).

The protein belongs to the HerA family. As to quaternary structure, homohexamer. Interacts with NurA.

The enzyme catalyses Couples ATP hydrolysis with the unwinding of duplex DNA at the replication fork by translocating in the 5'-3' direction. This creates two antiparallel DNA single strands (ssDNA). The leading ssDNA polymer is the template for DNA polymerase III holoenzyme which synthesizes a continuous strand.. It carries out the reaction ATP + H2O = ADP + phosphate + H(+). It catalyses the reaction Couples ATP hydrolysis with the unwinding of duplex DNA by translocating in the 3'-5' direction.. With respect to regulation, helicase activity is stimulated in the presence of NurA. Involved in DNA double-strand break (DSB) repair. Probably acts with NurA to stimulate resection of the 5' strand and produce the long 3' single-strand that is required for RadA loading. Has DNA-dependent ATPase activity and DNA helicase activity. This chain is DNA double-strand break repair helicase HerA, found in Pyrococcus furiosus (strain ATCC 43587 / DSM 3638 / JCM 8422 / Vc1).